Reading from the N-terminus, the 275-residue chain is NH(3)-dependent NAD(+) synthetase (275 aa).

47-54 (GISGGQDS) lines the ATP pocket. A Mg(2+)-binding site is contributed by Asp-53. Arg-141 is a binding site for deamido-NAD(+). Thr-161 contributes to the ATP binding site. Glu-166 contributes to the Mg(2+) binding site. Lys-174 and Asp-181 together coordinate deamido-NAD(+). ATP-binding residues include Lys-190 and Thr-212. Residue 261–262 (HK) coordinates deamido-NAD(+).

Belongs to the NAD synthetase family. In terms of assembly, homodimer.

It carries out the reaction deamido-NAD(+) + NH4(+) + ATP = AMP + diphosphate + NAD(+) + H(+). Its pathway is cofactor biosynthesis; NAD(+) biosynthesis; NAD(+) from deamido-NAD(+) (ammonia route): step 1/1. Catalyzes the ATP-dependent amidation of deamido-NAD to form NAD. Uses ammonia as a nitrogen source. This chain is NH(3)-dependent NAD(+) synthetase, found in Lacticaseibacillus paracasei (strain ATCC 334 / BCRC 17002 / CCUG 31169 / CIP 107868 / KCTC 3260 / NRRL B-441) (Lactobacillus paracasei).